A 399-amino-acid chain; its full sequence is Elongation factor Tu (399 aa).

The 195-residue stretch at 10–204 (KPHVNIGTIG…AVDASIPEPE (195 aa)) folds into the tr-type G domain. Residues 19–26 (GHVDHGKT) are G1. Residue 19 to 26 (GHVDHGKT) coordinates GTP. Position 26 (threonine 26) interacts with Mg(2+). Positions 60-64 (GITIN) are G2. A G3 region spans residues 81–84 (DCPG). Residues 81–85 (DCPGH) and 136–139 (NKCD) contribute to the GTP site. A G4 region spans residues 136–139 (NKCD). The tract at residues 174–176 (SGL) is G5.

Belongs to the TRAFAC class translation factor GTPase superfamily. Classic translation factor GTPase family. EF-Tu/EF-1A subfamily. As to quaternary structure, monomer.

Its subcellular location is the cytoplasm. The catalysed reaction is GTP + H2O = GDP + phosphate + H(+). In terms of biological role, GTP hydrolase that promotes the GTP-dependent binding of aminoacyl-tRNA to the A-site of ribosomes during protein biosynthesis. In Prochlorococcus marinus (strain NATL1A), this protein is Elongation factor Tu.